We begin with the raw amino-acid sequence, 419 residues long: Hyaluronan synthase (419 aa).

5 helical membrane-spanning segments follow: residues 8–28, 33–53, 318–338, 345–365, and 376–396; these read LIVL…MYLF, VGIY…LSFL, IVAL…VAIG, AIQL…IVAL, and PASF…LQPL.

The protein belongs to the NodC/HAS family. The cofactor is Mg(2+).

The protein localises to the cell membrane. The enzyme catalyses [hyaluronan](n) + UDP-N-acetyl-alpha-D-glucosamine = N-acetyl-beta-D-glucosaminyl-(1-&gt;4)-[hyaluronan](n) + UDP + H(+). It catalyses the reaction N-acetyl-beta-D-glucosaminyl-(1-&gt;4)-[hyaluronan](n) + UDP-alpha-D-glucuronate = [hyaluronan](n+1) + UDP + H(+). The protein operates within glycan biosynthesis; hyaluronan biosynthesis. Its function is as follows. Glycosaminoglycan synthesis. The hyaluronic acid capsule is involved in the pathogenicity of group A Streptococci; it may be the major virulence determinant. This Streptococcus pyogenes serotype M1 protein is Hyaluronan synthase (hasA).